Here is a 2968-residue protein sequence, read N- to C-terminus: Trinucleotide repeat-containing gene 18 protein (2968 aa).

Disordered regions lie at residues 1 to 24 (MDGR…SGLA) and 139 to 261 (GSPL…LAER). The segment covering 139-150 (GSPLLSQLGQPS) has biased composition (low complexity). Composition is skewed to basic and acidic residues over residues 221–233 (GKKD…EEAS) and 243–260 (QEAR…RLAE). Residue Ser-263 is modified to Phosphoserine. Residues 304 to 322 (GAKEAARQDEGARLLRRTE) are compositionally biased toward basic and acidic residues. Disordered regions lie at residues 304 to 356 (GAKE…PAGV) and 381 to 488 (FDER…PAAQ). Residues 327–351 (GPRPCPSPLPPPPAPPKGPPAPPAA) are compositionally biased toward pro residues. 3 stretches are compositionally biased toward basic and acidic residues: residues 395–405 (RDARAREREAG), 419–431 (PLDR…EKNS), and 464–479 (ELLK…ERAP). Ser-611 bears the Phosphoserine mark. Disordered regions lie at residues 612-679 (PFGG…EVRH), 941-1002 (EHRA…SPVA), 1019-1055 (PAYA…PENV), 1106-1190 (DADG…MATP), 1212-1236 (SCAE…PGRT), 1279-1306 (LAQV…GQCP), 1497-1566 (KQRE…SDDY), and 1687-1855 (SLKS…RERA). Lys-620 participates in a covalent cross-link: Glycyl lysine isopeptide (Lys-Gly) (interchain with G-Cter in SUMO2). Composition is skewed to basic and acidic residues over residues 651–660 (LKRDPERPES) and 941–955 (EHRA…KRGL). Residues 916-949 (LQQQAAQALELQRSAQLVQERLKAQEHRAEMEEK) adopt a coiled-coil conformation. Low complexity-rich tracts occupy residues 966–983 (AGPG…AGPA) and 1019–1031 (PAYA…SSHP). Residues 1032-1043 (TSPPPASPPPTP) show a composition bias toward pro residues. Positions 1046–1055 (TRKEEAPENV) are enriched in basic and acidic residues. Residues Ser-1127 and Ser-1136 each carry the phosphoserine modification. A compositionally biased stretch (basic and acidic residues) spans 1142–1162 (EPLREGPEEEPLAEREVKAEV). The span at 1171–1181 (ELPPLESPLPL) shows a compositional bias: pro residues. Positions 1481 to 1516 (LDFRMRLAEVQRQYKEKQRELVKLQRRRDSEDRREE) form a coiled coil. A compositionally biased stretch (basic and acidic residues) spans 1497-1519 (KQRELVKLQRRRDSEDRREEPHR). Positions 1520–1534 (SLARRGPGRPRKRTH) are enriched in basic residues. A Phosphoserine modification is found at Ser-1540. Over residues 1549–1563 (GHSSGKLSSKSLLTS) the composition is skewed to low complexity. Positions 1816-1842 (SSEESFDQDESSEEEDEEEELEEEDEA) are enriched in acidic residues. 2 positions are modified to phosphoserine: Ser-1857 and Ser-1863. 2 disordered regions span residues 1912–2148 (YTDS…LTPA) and 2295–2771 (LLVP…RLPS). 2 stretches are compositionally biased toward basic and acidic residues: residues 1957-1968 (SPDKAKLAVEKG) and 1993-2004 (LWTRRRSERIFL). The span at 2007-2024 (ASAAAPAPVSTAPATKTS) shows a compositional bias: low complexity. Residues 2034–2046 (PRKDAGRAKDRKD) are compositionally biased toward basic and acidic residues. Over residues 2069–2085 (ALPSEARAPHASSLTAA) the composition is skewed to low complexity. Residues 2093-2103 (KGKEVKKENRG) are compositionally biased toward basic and acidic residues. Thr-2146 carries the post-translational modification Phosphothreonine. Positions 2307 to 2316 (TSKDTGEGKD) are enriched in basic and acidic residues. Residues 2329–2338 (ARGRGRKPSA) are compositionally biased toward basic residues. Positions 2365 to 2374 (EPSSTPGSKK) are enriched in low complexity. A compositionally biased stretch (basic and acidic residues) spans 2375-2384 (SPPEPVDKRA). Residues 2390–2401 (RPAPPQPSPAPP) show a composition bias toward pro residues. Low complexity predominate over residues 2411-2433 (PFAELPAPATSLAPAPLITMPAT). 2 stretches are compositionally biased toward basic and acidic residues: residues 2441–2468 (RAAE…DHEG) and 2477–2487 (AKEALLLREDP). Composition is skewed to low complexity over residues 2559–2580 (SSSS…SGSE) and 2603–2671 (SAAS…SSSS). Residues 2673 to 2685 (TDEDSSCSSDDEA) show a composition bias toward acidic residues. Residues 2723-2736 (APQPQAPPPQPTQP) are compositionally biased toward pro residues. The residue at position 2771 (Ser-2771) is a Phosphoserine. The BAH domain maps to 2817 to 2962 (EMIRIGDCAV…PTTGMIFSTD (146 aa)).

The sequence is that of Trinucleotide repeat-containing gene 18 protein from Homo sapiens (Human).